Reading from the N-terminus, the 329-residue chain is MSASPLKVAVTGAAGQIGYSLLFRLASGSLLGPDRPIELRLLEIEPALQALEGVVMELDDCAFPLLSGVEIGSDPQKIFDGVSLALLVGARPRGAGMERSDLLEANGAIFTAQGKALNAVAADDVRVGVTGNPANTNALIAMTNAPDIPRERFSALTRLDHNRAISQLAAKTGAAVTDIKKMTIWGNHSATQYPDLFHAEVAGKNAAEVVNDQAWIEDEFIPTVAKRGAAIIDARGASSAASAASATIDAARDWLLGTPADDWVSMAVVSDGSYGVPEGLISSFPVTTKGGNWTIVSGLEIDEFSRGRIDKSTAELADERSAVTELGLI.

NAD(+) is bound at residue 12 to 18 (GAAGQIG). Residues R93 and R99 each contribute to the substrate site. Residues N106, Q113, and 130–132 (TGN) contribute to the NAD(+) site. Substrate contacts are provided by N132 and R163. The active-site Proton acceptor is the H188.

This sequence belongs to the LDH/MDH superfamily. MDH type 2 family.

It carries out the reaction (S)-malate + NAD(+) = oxaloacetate + NADH + H(+). Functionally, catalyzes the reversible oxidation of malate to oxaloacetate. This is Malate dehydrogenase from Mycobacterium bovis (strain ATCC BAA-935 / AF2122/97).